Reading from the N-terminus, the 35-residue chain is U2-agatoxin-Aop1a (35 aa).

3 disulfide bridges follow: Cys3–Cys19, Cys10–Cys24, and Cys18–Cys34. At Leu35 the chain carries Leucine amide.

Belongs to the neurotoxin 01 (U2-agtx) family. As to expression, expressed by the venom gland.

The protein localises to the secreted. In terms of biological role, insect-selective toxin causing rapid but reversible paralysis in crickets. Suppresses the excitatory postsynaptic potentials evoked in lobster neuromuscular synaptic preparations, possibly by blocking the presynaptic calcium channel (Cav). Induces instantaneous reversible paralysis when injected into crickets. The polypeptide is U2-agatoxin-Aop1a (Allagelena opulenta (Funnel weaving spider)).